We begin with the raw amino-acid sequence, 209 residues long: Ribosomal RNA large subunit methyltransferase E (209 aa).

Residues Gly63, Trp65, Asp83, Asp99, and Asp124 each contribute to the S-adenosyl-L-methionine site. The active-site Proton acceptor is Lys164.

Belongs to the class I-like SAM-binding methyltransferase superfamily. RNA methyltransferase RlmE family.

Its subcellular location is the cytoplasm. It catalyses the reaction uridine(2552) in 23S rRNA + S-adenosyl-L-methionine = 2'-O-methyluridine(2552) in 23S rRNA + S-adenosyl-L-homocysteine + H(+). Its function is as follows. Specifically methylates the uridine in position 2552 of 23S rRNA at the 2'-O position of the ribose in the fully assembled 50S ribosomal subunit. The polypeptide is Ribosomal RNA large subunit methyltransferase E (Photorhabdus laumondii subsp. laumondii (strain DSM 15139 / CIP 105565 / TT01) (Photorhabdus luminescens subsp. laumondii)).